A 209-amino-acid chain; its full sequence is HTH-type transcriptional repressor BepR (209 aa).

The 61-residue stretch at 9–69 folds into the HTH tetR-type domain; sequence AETREAILLA…SIIGRARFPQ (61 aa). The segment at residues 32-51 is a DNA-binding region (H-T-H motif); that stretch reads TLTEIACYAGVTRGAIYFHF.

Its function is as follows. Represses expression of bepDE. This chain is HTH-type transcriptional repressor BepR (bepR), found in Brucella suis biovar 1 (strain 1330).